We begin with the raw amino-acid sequence, 410 residues long: Elongation factor Tu, chloroplastic (410 aa).

One can recognise a tr-type G domain in the interval K10–Q214. The G1 stretch occupies residues G19–T26. G19–T26 contributes to the GTP binding site. T26 contributes to the Mg(2+) binding site. The segment at G60–N64 is G2. The tract at residues D81 to G84 is G3. GTP is bound by residues D81 to H85 and N136 to D139. Residues N136–D139 form a G4 region. The G5 stretch occupies residues S174–L176.

It belongs to the TRAFAC class translation factor GTPase superfamily. Classic translation factor GTPase family. EF-Tu/EF-1A subfamily.

It localises to the plastid. It is found in the chloroplast. The enzyme catalyses GTP + H2O = GDP + phosphate + H(+). GTP hydrolase that promotes the GTP-dependent binding of aminoacyl-tRNA to the A-site of ribosomes during protein biosynthesis. In Mesostigma viride (Green alga), this protein is Elongation factor Tu, chloroplastic (tufA).